We begin with the raw amino-acid sequence, 1044 residues long: Translation initiation factor IF-2 (1044 aa).

Positions 31–425 (VRSASSTVEP…RKSKRAKRQE (395 aa)) are disordered. 2 stretches are compositionally biased toward pro residues: residues 77 to 98 (GPAP…PQPA) and 106 to 116 (APAPAPAPRPA). Residues 117–148 (EPAANPAPAAPPAFQAPAPAPAERPAAAQRPA) are compositionally biased toward low complexity. The span at 168–185 (GGPGQGPRPGARPGGPGA) shows a compositional bias: gly residues. Positions 204 to 247 (GPGDRPERSERPDRGDRPQGDRPRSDRPQGERQQGDRPQGDRPG) are enriched in basic and acidic residues. Positions 285-304 (GGAPRPGNNPFASNQGMPRP) are enriched in low complexity. Residues 305-328 (QGGPRPTPAGPGGPRPGGPRPNPG) show a composition bias toward pro residues. The segment covering 329–338 (MMPARPTVGR) has biased composition (low complexity). Gly residues predominate over residues 339-409 (PGAGPGAGRP…GTQGAFGRAG (71 aa)). Basic residues predominate over residues 413–422 (VRGRKSKRAK). The 173-residue stretch at 537-709 (ARPPVVTVMG…VLLTADASLD (173 aa)) folds into the tr-type G domain. The interval 546–553 (GHVDHGKT) is G1. 546–553 (GHVDHGKT) is a GTP binding site. The segment at 571–575 (GITQH) is G2. The tract at residues 596 to 599 (DTPG) is G3. GTP is bound by residues 596 to 600 (DTPGH) and 650 to 653 (NKVD). The G4 stretch occupies residues 650–653 (NKVD). The tract at residues 686–688 (SAR) is G5.

It belongs to the TRAFAC class translation factor GTPase superfamily. Classic translation factor GTPase family. IF-2 subfamily.

It localises to the cytoplasm. Its function is as follows. One of the essential components for the initiation of protein synthesis. Protects formylmethionyl-tRNA from spontaneous hydrolysis and promotes its binding to the 30S ribosomal subunits. Also involved in the hydrolysis of GTP during the formation of the 70S ribosomal complex. This chain is Translation initiation factor IF-2, found in Kineococcus radiotolerans (strain ATCC BAA-149 / DSM 14245 / SRS30216).